The primary structure comprises 94 residues: MASVGERPAPVPVKDKKLLEVKLGELPSWILMRDFSPSGIFGAFQRGYYRYYNKYINVKKGSISGITMVLACYVLFSYSFSYKHLKHERLRKYH.

At Ala2 the chain carries N-acetylalanine. Ser3 is subject to Phosphoserine. N6-acetyllysine is present on Lys22. Residues 68 to 85 (MVLACYVLFSYSFSYKHL) traverse the membrane as a helical segment.

The protein belongs to the ATPase F chain family. Component of the ATP synthase complex composed at least of ATP5F1A/subunit alpha, ATP5F1B/subunit beta, ATP5MC1/subunit c (homooctomer), MT-ATP6/subunit a, MT-ATP8/subunit 8, ATP5ME/subunit e, ATP5MF/subunit f, ATP5MG/subunit g, ATP5MK/subunit k, ATP5MJ/subunit j, ATP5F1C/subunit gamma, ATP5F1D/subunit delta, ATP5F1E/subunit epsilon, ATP5PF/subunit F6, ATP5PB/subunit b, ATP5PD/subunit d, ATP5PO/subunit OSCP. ATP synthase complex consists of a soluble F(1) head domain (subunits alpha(3) and beta(3)) - the catalytic core - and a membrane F(0) domain - the membrane proton channel (subunits c, a, 8, e, f, g, k and j). These two domains are linked by a central stalk (subunits gamma, delta, and epsilon) rotating inside the F1 region and a stationary peripheral stalk (subunits F6, b, d, and OSCP).

It localises to the mitochondrion. The protein localises to the mitochondrion inner membrane. Subunit f, of the mitochondrial membrane ATP synthase complex (F(1)F(0) ATP synthase or Complex V) that produces ATP from ADP in the presence of a proton gradient across the membrane which is generated by electron transport complexes of the respiratory chain. ATP synthase complex consist of a soluble F(1) head domain - the catalytic core - and a membrane F(1) domain - the membrane proton channel. These two domains are linked by a central stalk rotating inside the F(1) region and a stationary peripheral stalk. During catalysis, ATP synthesis in the catalytic domain of F(1) is coupled via a rotary mechanism of the central stalk subunits to proton translocation. In vivo, can only synthesize ATP although its ATP hydrolase activity can be activated artificially in vitro. Part of the complex F(0) domain. In Pongo abelii (Sumatran orangutan), this protein is ATP synthase F(0) complex subunit f, mitochondrial.